The primary structure comprises 109 residues: Serine protease inhibitor (109 aa).

The N-terminal stretch at 1–28 (MKMKLLQVHFVLLVSSSFLLGYTGMVTA) is a signal peptide. 5 disulfides stabilise this stretch: C43–C83, C52–C79, C58–C73, C62–C104, and C85–C98. The TIL domain occupies 43 to 104 (CRENEIFSQC…QGVCILENSC (62 aa)).

It belongs to the serine protease inhibitor-like (TIL domain-containing) family. As to expression, ubiquitously expressed (at protein level), including in venom glands. Found more precisely in the epidermis, fat body, gut, muscle, and venom of worker bees.

It is found in the secreted. Its function is as follows. Dual role peptide that functions as a broad-spectrum antimicrobial peptide and antifibrinolytic toxin. Inhibits trypsin (IC(50)=375 nM), plasmin (IC(50)=2140 nM), and microbial serine proteases (subtilisin A (IC(50)=294 nM) and proteinase K (IC(50)=459 nM)). Exhibits antifibrinolytic activity by binding and inhibiting plasmin. Does not inhibit chymotrypsin, elastase or thrombin. Binds to microbial cell wall carbohydrates (LPS, mannan and N-acetyl-D-glucosamine) and shows antimicrobial activity (MIC=4.1 uM against B.thuringiensis, MIC=4.95 uM against E.coli, MIC=9.6 uM against the fungus B.bassiana). Does not show hemolytic activity. The polypeptide is Serine protease inhibitor (Bombus ignitus (Bumblebee)).